Reading from the N-terminus, the 96-residue chain is UPF0213 protein Lreu_0682 (96 aa).

The GIY-YIG domain occupies 4-81; the sequence is EKYYIYVLYC…KHQTRRQKEK (78 aa).

It belongs to the UPF0213 family.

The protein is UPF0213 protein Lreu_0682 of Limosilactobacillus reuteri (strain DSM 20016) (Lactobacillus reuteri).